Here is an 82-residue protein sequence, read N- to C-terminus: Small ribosomal subunit protein bS16 (82 aa).

This sequence belongs to the bacterial ribosomal protein bS16 family.

This Shigella boydii serotype 18 (strain CDC 3083-94 / BS512) protein is Small ribosomal subunit protein bS16.